A 542-amino-acid chain; its full sequence is Chitinase 1 (542 aa).

The GH18 domain maps to 68 to 506; the sequence is FNVLCYFTDW…NAAHEGLKRR (439 aa). Chitin-binding positions include 186–187 and 213–216; these read QE and GGWS. The active-site Proton donor is the glutamate 256. Residues tyrosine 257, 323–326, and tryptophan 486 each bind chitin; that span reads MTYD.

The protein belongs to the glycosyl hydrolase 18 family. In terms of assembly, semipurified toxin complex consists of at least YenA1-YenA2-YenB-YenC1-YenC2-Chi1-Chi2. The Yen-TC:K9 subcomplex is about 26 nm tall and 22 nm in diameter with 5-fold symmetry and 5 copies of YenA1, YenA2, Chi1 and Chi2; the chitinase subunits may be solvent accessible on the exterior the complex. The Yen-TC:K9 subcomplex has no insecticidal activity. The native complex with additional YenB, YenC1 and YenC2 subunits is 16 nm taller and is insecticidal; the toxicity-conferring subunits are present at about 1 copy each.

The protein localises to the secreted. The enzyme catalyses Random endo-hydrolysis of N-acetyl-beta-D-glucosaminide (1-&gt;4)-beta-linkages in chitin and chitodextrins.. Toxin complex is secreted when grown at 25 degrees Celsius or less; at higher temperatures the proteins are present intracellularly but not secreted. Part of an orally active toxin complex (TC) with strong insecticidal effects on larvae of the Coleoptera Costelytra zealandica, Acrossidius tasmania and Adoryphorus couloni and some Lepidoptera larvae. The TC has an endochitinase activity. This subunit might aid infection by degradation of the larval peritrophic membrane. The protein is Chitinase 1 of Yersinia entomophaga.